The chain runs to 492 residues: Malonyl-CoA decarboxylase, mitochondrial (492 aa).

Residues 1 to 28 (MRGLGPGLRARRLLPLRSPPRPPGPRGR) are disordered. A mitochondrion-targeting transit peptide spans 1-38 (MRGLGPGLRARRLLPLRSPPRPPGPRGRRLCGGLAASA). The tract at residues 39 to 189 (MDELLRRAVP…VLKSMLSEWF (151 aa)) is alpha-helical domain. K58 is modified (N6-acetyllysine). N6-acetyllysine; alternate is present on K167. K167 bears the N6-succinyllysine; alternate mark. Positions 190 to 492 (SSGFLNLERV…VAQFQNNSKL (303 aa)) are catalytic domain. Residue K210 is modified to N6-acetyllysine. K221 bears the N6-succinyllysine mark. 298 to 304 (QGVELGT) contacts malonyl-CoA. N6-acetyllysine is present on K316. Malonyl-CoA is bound at residue S328. S328 (proton acceptor) is an active-site residue. K385 is subject to N6-acetyllysine; alternate. An N6-succinyllysine; alternate modification is found at K385. K388 carries the post-translational modification N6-acetyllysine. H422 is a malonyl-CoA binding site. The Proton donor role is filled by H422. Residues K441 and K471 each carry the N6-acetyllysine modification. Residues 490 to 492 (SKL) carry the Microbody targeting signal motif.

In terms of assembly, homotetramer. Dimer of dimers. The two subunits within a dimer display conformational differences suggesting that at any given moment, only one of the two subunits is competent for malonyl-CoA binding and catalytic activity. Under oxidizing conditions, can form disulfide-linked homotetramers (in vitro). Associates with the peroxisomal targeting signal receptor PEX5. Post-translationally, interchain disulfide bonds may form in peroxisomes (Potential). Interchain disulfide bonds are not expected to form in the reducing environment of the cytoplasm and mitochondria. In terms of processing, acetylation at Lys-471 activates malonyl-CoA decarboxylase activity. Deacetylation at Lys-471 by SIRT4 represses activity, leading to promote lipogenesis.

The protein localises to the cytoplasm. Its subcellular location is the mitochondrion matrix. It is found in the peroxisome. The protein resides in the peroxisome matrix. The catalysed reaction is malonyl-CoA + H(+) = acetyl-CoA + CO2. The protein operates within metabolic intermediate biosynthesis; acetyl-CoA biosynthesis; acetyl-CoA from malonyl-CoA: step 1/1. Malonyl-CoA decarboxylase activity does not require any cofactors or divalent metal ions. Catalyzes the conversion of malonyl-CoA to acetyl-CoA. In the fatty acid biosynthesis MCD selectively removes malonyl-CoA and thus assures that methyl-malonyl-CoA is the only chain elongating substrate for fatty acid synthase and that fatty acids with multiple methyl side chains are produced. In peroxisomes it may be involved in degrading intraperoxisomal malonyl-CoA, which is generated by the peroxisomal beta-oxidation of odd chain-length dicarboxylic fatty acids. Plays a role in the metabolic balance between glucose and lipid oxidation in muscle independent of alterations in insulin signaling. Plays a role in controlling the extent of ischemic injury by promoting glucose oxidation. This is Malonyl-CoA decarboxylase, mitochondrial from Mus musculus (Mouse).